We begin with the raw amino-acid sequence, 2729 residues long: MAAHGQTSKRGNNTLLLFGALVQSHDVSTLRSMRESIVVQHGEHSWLVDSIKALPQDFEAALPHLPFFDQATTTTIHQLLVDAVSSFLTGSFETLVSPLPAALLIPLAVATQLAHYVEYSRQSPTGLAEGKEALGFCTGILSAFAVASSHDVCDLAKYGAAAMRLGMLVGLVVDCEDAAAGQGRYRSVSAGWDSEEKHAAMLKIVQSFEEAYVSVHFDKNRATITTSPGTISNLTRQLQKEGLVASDMGLLGRFHFAGSTKPREVTVDQLVSFCNSPAGALFRLPDADSLRLATRINDRDGGLITQGSLHEHALQSILVKLAAWFETFSSATTTQANTGAQNGRARPQIVDFGPQNSVPHSLASTVDINSGNGKTRRVKPADAQSSANSTHTRPWLDTDIAIVGMSCKVPGAENLEEFWDLLVSGKSQHQEISGQEGGRFDFGDTAFRTAADQRRRWFANLVSNHDQFDHRFFKKSARESASMDPQQRHILQVAYQAVEGSGYFNKSSSSTPTNANIGCYVGLCLGDYESNVASHPATAFTATGNLQGFVSGKVSHYFGWTGPAVTVNTACSSSLVAVHLACQAILSGECEAALAGGSHIMTSATWFQNLAGGSFLSPTGACKPFDSKADGYCRGEGVGAVFLKRMSQAMADGDMVLGVVAATGVQQNQNCTPIFVPNAPSLENLFSRVMTKARVKPADISVVEGHGTGTAVGDPAEYDAIRKALGGTTHRSADKPLMLSSVKGLVGHMECTSGVIGMIKLLLMMNKGALPPQASFQSINPALGATPADHMFIPTRPQPWVVPAGGFRAALLNNYGASGSNASAVLVQSPSMSFRPEITVGSRPAAGIKFPFWLAAFDKKSLSRYVKALRKWLCRLDGDQSLASLSFNLARQSNRTMQANLVLTARSIEALDQSLADFENGNDGSFIERTPASSQPTVILCFGGQVSCFVGLDKQVYQDMALVRYYLDRVDAVIQCQGGRSIFPGIFNRSPPSKVDIVHLHTMLFAMQYASARCWIDSGVKPAALVGHSFGTLTALCISGILSLEDTIKAIMCRAKLLNEAWGPDQGGMIAVEGDIDVIEELLDEANKNHDDKPATIACYNGPTSFTLAGSTTAMDAVAAQLKNGAKYSKGMKSKRIYVTHAFHSVLVDPLLEELTQRVADSGVRFRKPIIPVELSTEQHMSESELTSEFMANHMRQPVYFHHAVERLARRYAGGSSPCVFLEAGTNSSVCNMASRALGSTEFVTKSSSLSFHGVNIANCDAGWNKLTDTTVNLWETGVRVHHWAHHGVQQMHQTDIKPLLVPPYQFDPDSRHWIDLKVPRKALMETDEADAGGKKQSDAEKLPETILTFHSSDAVGAQKQARFRVNTMLEEYKQLLRGHMTLETAPILSATLQINLVIEAISSTQPEYKSSKSQPQIQDVVYQSPVCFNSANTLWVEVTNVSGQWMFQVFSTTTQELSPKSTRMVHTKGTVAFKNPGDAEIRRQLMSYERLFSHGRATDLLQNSNASTAPIDEMLGNQSIYRIFSEIVSYGPEFRGLQKMVSRGNETAGHVVHLKHQDSASTEAEPWFDPHLADTFCQLGGLWVNCMMPERERGNGHVYLANGIDQWIRGYPAASTDRPEAFNVFAVNKQASEQLTLTDVFVFNAADGALVEVILGIAYVKIARPSMEKLLARLTEPSWVAGGKTTPQTATKPAAAPVVADHTPRTTESASTVNGVNLDDRKPEGTALPQEMLSDTEELRPKAQGQELQDMIARVKAVMADISGLDISEIKDDSNLADLGIDSLVGMEMTHEIESTLKVELPESEIMSVVDMEGLLQCVAGALGLSMTGASSDTLTASSDSGINSAKSSILSGTSTSTSTGTTDTGSDVGQSMKEPSLMLDTVKKAFAQTKEATDARIKAASNQVSYCSTSLPQQNELSVLLTITALEALGAGFSTARPGSQLTRISHAPGHEQFVTHLYKEIETATQIIKIDGHGAQAVITRTAVPLPDVESRQVALCEQMLRGDPEQVGTMELIKHAGENLHRVLSGETDGAKVIFGSKTGSKLVSQWYAQWPLNRSLIAQMGDFLTAVVAGIQADEDMPFSEINPLRIMETGAGTGGTTKQIVPLLARLGLPVVYTFTDLAPSFVAAARKTWGKEYPWMQFRTLDMEKTPPSVEDGLPLQHFIVSANAVHATKSISATTGNLRKALRTDGFLLMMEMTRTPFWVDLIFGLFEGWWLFEDGRKHALTHEALWDQELSKVGFGYVDWTEGMTAESEIQKIILASADANTRLERVRLPASHTDYHLNQVGVENEARELMVADYVSTLTKEFNKTMTQYTDAGLSLSSRTSQTPMSSQKRCILITGGTGGLGAHLVAEAALLPDVNMVICLNRPNRKQEARERQLVSLEKKGLILSPEALAKITVFETDLSQPGSLGLSDDKYNLLRGNVTHIIHNAWLMHSKWPVRRFEPQLRIMAHMLNLAADIATCQRTQGQRQPGPPVSFVFVSSIATVGYHPVVTNPGNPAVPETRIPISSVLPTGYGEAKYICERMLDATLHQYPAQFRASAVRLGQIAGSEINGHWNSAEHISFLVKSSQSIGALPALPGPMGWTPADYVARGLVEIATQPDNIELYPIYHIENPVRQPWDEALAVLADEMGISSEALPFQEWVQTVRDWPRQGDNTAAGANPAYLLVDFLEDHFLRMSCGGLLLGTAKAREHSPSLAGMGPVSDELLRLFVRSWKEVGFLL.

The N-terminal acylcarrier protein transacylase domain (SAT) stretch occupies residues 99-238 (LPAALLIPLA…GTISNLTRQL (140 aa)). Polar residues predominate over residues 361–373 (SLASTVDINSGNG). A disordered region spans residues 361–391 (SLASTVDINSGNGKTRRVKPADAQSSANSTH). In terms of domain architecture, Ketosynthase family 3 (KS3) spans 397-828 (DTDIAIVGMS…GSNASAVLVQ (432 aa)). Residues Cys571, His706, and His748 each act as for beta-ketoacyl synthase activity in the active site. Residues 942 to 1230 (FGGQVSCFVG…FLEAGTNSSV (289 aa)) form a malonyl-CoA:ACP transacylase (MAT) domain region. Ser1029 (for acyl/malonyl transferase activity) is an active-site residue. The interval 1345–1479 (ETILTFHSSD…GTVAFKNPGD (135 aa)) is N-terminal hotdog fold. One can recognise a PKS/mFAS DH domain in the interval 1345–1669 (ETILTFHSSD…YVKIARPSME (325 aa)). Positions 1374–1665 (KQLLRGHMTL…LGIAYVKIAR (292 aa)) are product template (PT) domain. His1380 acts as the Proton acceptor; for dehydratase activity in catalysis. The C-terminal hotdog fold stretch occupies residues 1513-1669 (DEMLGNQSIY…YVKIARPSME (157 aa)). Asp1575 functions as the Proton donor; for dehydratase activity in the catalytic mechanism. Residues 1682 to 1701 (AGGKTTPQTATKPAAAPVVA) are compositionally biased toward low complexity. Positions 1682 to 1726 (AGGKTTPQTATKPAAAPVVADHTPRTTESASTVNGVNLDDRKPEG) are disordered. Polar residues predominate over residues 1707–1716 (TTESASTVNG). The 75-residue stretch at 1750 to 1824 (QDMIARVKAV…GLLQCVAGAL (75 aa)) folds into the Carrier domain. Ser1784 is modified (O-(pantetheine 4'-phosphoryl)serine). Low complexity predominate over residues 1835 to 1868 (TLTASSDSGINSAKSSILSGTSTSTSTGTTDTGS). The disordered stretch occupies residues 1835–1874 (TLTASSDSGINSAKSSILSGTSTSTSTGTTDTGSDVGQSM). A methyltransferase (C-MeT) domain region spans residues 2086–2254 (EINPLRIMET…GYVDWTEGMT (169 aa)). A reductase (R) domain region spans residues 2344–2599 (ITGGTGGLGA…GWTPADYVAR (256 aa)).

It participates in secondary metabolite biosynthesis; terpenoid biosynthesis. Its function is as follows. Non-reducing polyketide synthase; part of the gene cluster that mediates the biosynthesis of xenovulene A, an unusual meroterpenoid that has potent inhibitory effects on the human gamma-aminobutyrate A (GABAA) benzodiazepine receptor. The first step of xenovulene A biosynthesis is the biosynthesis of 3-methylorcinaldehyde performed by the non-reducing polyketide synthase aspks1. The salicylate hydroxylase asL1 then catalyzes the oxidative dearomatization of 3-methylorcinaldehyde to yield a dearomatized hydroxycyclohexadione. The 2-oxoglutarate-dependent dioxygenase asL3 further catalyzes the oxidative ring expansion to provide the first tropolone metabolite. The cytochrome P450 monooxygenase asR2 allows the synthesis of tropolone hemiacetal. In parallel, a previously unrecognised class of terpene cyclase, asR6, produces alpha-humulene from farnesylpyrophosphate (FPP). The putative Diels-Alderase asR5 probably catalyzes the formation of the tropolone-humulene skeleton by linking humulene and the polyketide moiety. Oxidative-ring contractions catalyzed by asL4 and asL6 then processively remove carbon atoms from the polyketide to yield xenovulene A. The chain is 3-methylorcinaldehyde synthase from Sarocladium schorii (Acremonium strictum (strain IMI 501407)).